Here is a 297-residue protein sequence, read N- to C-terminus: uncharacterized protein (297 aa).

Glu46 is an active-site residue.

This sequence belongs to the PhzF family. As to quaternary structure, homodimer and homotetramer.

This is an uncharacterized protein from Salmonella typhimurium (strain LT2 / SGSC1412 / ATCC 700720).